The primary structure comprises 360 residues: S-adenosylmethionine:tRNA ribosyltransferase-isomerase (360 aa).

It belongs to the QueA family. Monomer.

It localises to the cytoplasm. It carries out the reaction 7-aminomethyl-7-carbaguanosine(34) in tRNA + S-adenosyl-L-methionine = epoxyqueuosine(34) in tRNA + adenine + L-methionine + 2 H(+). Its pathway is tRNA modification; tRNA-queuosine biosynthesis. Its function is as follows. Transfers and isomerizes the ribose moiety from AdoMet to the 7-aminomethyl group of 7-deazaguanine (preQ1-tRNA) to give epoxyqueuosine (oQ-tRNA). The polypeptide is S-adenosylmethionine:tRNA ribosyltransferase-isomerase (Rhodopseudomonas palustris (strain TIE-1)).